The sequence spans 91 residues: Sec-independent protein translocase protein TatA (91 aa).

The helical transmembrane segment at 1 to 21 (MGSMSVWHWVIVAVVVMLLFG) threads the bilayer. The tract at residues 42 to 91 (GMADDETQPTNTTSVPPVGPNDPVRTLPHQGAPGTAPQQTHVPAGDHKAV) is disordered.

This sequence belongs to the TatA/E family. As to quaternary structure, the Tat system comprises two distinct complexes: a TatABC complex, containing multiple copies of TatA, TatB and TatC subunits, and a separate TatA complex, containing only TatA subunits. Substrates initially bind to the TatABC complex, which probably triggers association of the separate TatA complex to form the active translocon.

The protein resides in the cell inner membrane. Functionally, part of the twin-arginine translocation (Tat) system that transports large folded proteins containing a characteristic twin-arginine motif in their signal peptide across membranes. TatA could form the protein-conducting channel of the Tat system. In Methylorubrum populi (strain ATCC BAA-705 / NCIMB 13946 / BJ001) (Methylobacterium populi), this protein is Sec-independent protein translocase protein TatA.